We begin with the raw amino-acid sequence, 78 residues long: uncharacterized protein (78 aa).

This is an uncharacterized protein from Amsacta (AmEPV).